We begin with the raw amino-acid sequence, 107 residues long: Nucleoid-associated protein BAbS19_I00290 (107 aa).

It belongs to the YbaB/EbfC family. As to quaternary structure, homodimer.

It localises to the cytoplasm. The protein localises to the nucleoid. In terms of biological role, binds to DNA and alters its conformation. May be involved in regulation of gene expression, nucleoid organization and DNA protection. The chain is Nucleoid-associated protein BAbS19_I00290 from Brucella abortus (strain S19).